Consider the following 1337-residue polypeptide: Multidrug resistance protein fer6 (1337 aa).

Residues 1–23 (MTPEASANWFSLCWFAWIDPILT) form the signal peptide. N-linked (GlcNAc...) asparagine glycosylation occurs at Asn-71. 2 helical membrane-spanning segments follow: residues 94 to 114 (FWIG…SPLL) and 138 to 158 (LGSG…CVFL). One can recognise an ABC transmembrane type-1 1 domain in the interval 95-386 (WIGGLLKLLA…LPIAWNAIVD (292 aa)). Asn-187 carries N-linked (GlcNAc...) asparagine glycosylation. 4 helical membrane passes run 220-242 (FFHM…IWSL), 247-269 (LPGI…RLFA), 331-351 (ALAF…YALV), and 359-379 (ILFS…FLPI). In terms of domain architecture, ABC transporter 1 spans 417–667 (IQLEDASFTW…KGRVAELLLT (251 aa)). The tract at residues 432-460 (ADTAKPVNEKKGQDSPSNEKETPVDRAST) is disordered. A compositionally biased stretch (basic and acidic residues) spans 438–455 (VNEKKGQDSPSNEKETPV). N-linked (GlcNAc...) asparagine glycosylation occurs at Asn-465. 478–485 (GGVGSGKS) provides a ligand contact to ATP. A disordered region spans residues 699 to 751 (GSASNRNSEASESTTTTVNAESKDTSNAEGVTNKTEKKDLVAPPAQAKSKALM). Low complexity predominate over residues 700-718 (SASNRNSEASESTTTTVNA). Asn-731 carries an N-linked (GlcNAc...) asparagine glycan. Transmembrane regions (helical) follow at residues 769–789 (YLNA…VLVF), 817–837 (GIYA…GVIF), 890–909 (AMRT…VLIA), 915–933 (FLIP…AAYY), 999–1019 (LSVR…ILVV), and 1028–1048 (GETG…GWMI). The region spanning 781-1056 (LFLVAVLVFQ…MIRHAAELEN (276 aa)) is the ABC transmembrane type-1 2 domain. N-linked (GlcNAc...) asparagine glycosylation occurs at Asn-1057. Residues 1097–1325 (IRFEGVEAKY…EKGAFRALCD (229 aa)) form the ABC transporter 2 domain. 1131–1138 (GRTGAGKS) contributes to the ATP binding site. An N-linked (GlcNAc...) asparagine glycan is attached at Asn-1227.

This sequence belongs to the ABC transporter superfamily. ABCC family. Conjugate transporter (TC 3.A.1.208) subfamily.

It is found in the membrane. Its function is as follows. Multidrug resistance protein; part of the gene cluster that mediates the biosynthesis of siderophore ferrichrome A which is contributing to organismal virulence. This Mycosarcoma maydis (Corn smut fungus) protein is Multidrug resistance protein fer6.